Reading from the N-terminus, the 429-residue chain is Sex determination protein fox-1 (429 aa).

A compositionally biased stretch (low complexity) spans 156–180 (ATTAGSTNGSAAVTQPDPSTSSGPD). Residues 156-188 (ATTAGSTNGSAAVTQPDPSTSSGPDGPKRLHVS) are disordered. Positions 183-259 (KRLHVSNIPF…RKIEVNCATA (77 aa)) constitute an RRM domain.

As to quaternary structure, interacts with sup-12. In males and hermaphrodites expressed in a subset of cells in the head and tail. Expressed in the pharynx, intestine and in muscles from the vulva and body wall.

The protein localises to the nucleus. Its function is as follows. RNA-binding protein that regulates tissue-specific alternative splicing events by binding to 5'-UGCAUG-3' and 5'-GCACG-3' elements. Also binds to poly(A), poly(G), poly(C), or poly(U) stretches of RNA. Plays a role in the sex determination pathway and X chromosome dosage compensation, and together with sex-1 is involved in making the distinction between one and two X-chromosomes. Binds to 5'-GCAUG-3' and 5'-GCACG-3' elements in intron 6 of the pre-mRNA of the sex-determining factor xol-1 to promote its alternative splicing and together with sex-1 negatively regulates the expression of xol-1 to promote hermaphrodite development. Negatively regulates the expression of the active isoform of xol-1 (isoform b) by promoting intron 6 retention and the deletion of exon 7 coding sequences in hermaphrodite embryos. Furthermore, binding to the pre-mRNA of xol-1 can also direct the use of an alternative 3' splice site enabling the xol-1 transcript to be trans-spliced to unrelated genes on chromosome 2, which also leads to xol-1 exon 7 deletion. Does not seem to regulate the retention of introns 1 to 5 of xol-1 pre-mRNA. Plays a role in the association of the dosage compensation complex proteins dpy-27 and sdc-3 with the hermaphrodite X chromosomes. Binds to 5'-UGCAUG-3' elements in intron 7 of the pre-mRNA of unc-32 to promote its alternative splicing in neuronal tissues. Binds to 5'-UGCAUG-3' elements in intron 4 of the pre-mRNA of egl-15 to promote its alternative splicing in body wall muscle tissues. Promotes binding of RNA-binding protein sup-12 to target RNA. Plays a role in male mating behavior. The polypeptide is Sex determination protein fox-1 (Caenorhabditis elegans).